A 142-amino-acid polypeptide reads, in one-letter code: Large ribosomal subunit protein uL13 (142 aa).

This sequence belongs to the universal ribosomal protein uL13 family. In terms of assembly, part of the 50S ribosomal subunit.

Functionally, this protein is one of the early assembly proteins of the 50S ribosomal subunit, although it is not seen to bind rRNA by itself. It is important during the early stages of 50S assembly. The polypeptide is Large ribosomal subunit protein uL13 (Shewanella denitrificans (strain OS217 / ATCC BAA-1090 / DSM 15013)).